Reading from the N-terminus, the 265-residue chain is Speedy protein E13 (265 aa).

Positions 1 to 80 (MGQILGKIMM…EPEKELAPEP (80 aa)) are disordered. Acidic residues predominate over residues 66–80 (DESDDEPEKELAPEP).

This sequence belongs to the Speedy/Ringo family.

The protein is Speedy protein E13 of Homo sapiens (Human).